Consider the following 606-residue polypeptide: Limonene synthase, chloroplastic (606 aa).

The N-terminal 38 residues, 1–38, are a transit peptide targeting the chloroplast; the sequence is MAIINLPVPTNSSSEVNKHNHLRSCLPSGRATFTTLSA. 5 residues coordinate (2E)-geranyl diphosphate: R320, D357, D361, R497, and D500. Positions 357 and 361 each coordinate Mg(2+). The DDXXD motif motif lies at 357-361; it reads DDIYD. Mg(2+)-binding residues include D500, T504, and E508.

This sequence belongs to the terpene synthase family. Tpsb subfamily. As to quaternary structure, monomer. The cofactor is Mg(2+). Mn(2+) serves as cofactor. In terms of tissue distribution, confined to fruits.

The protein resides in the plastid. It is found in the chloroplast. The catalysed reaction is (2E,6E)-farnesyl diphosphate = (E)-beta-farnesene + diphosphate. It carries out the reaction (2E)-geranyl diphosphate = limonene + diphosphate. The enzyme catalyses (2E)-geranyl diphosphate = beta-pinene + diphosphate. It catalyses the reaction (2E)-geranyl diphosphate = sabinene + diphosphate. The catalysed reaction is (2E)-geranyl diphosphate = beta-myrcene + diphosphate. It carries out the reaction (2E)-geranyl diphosphate = alpha-pinene + diphosphate. The enzyme catalyses (2E)-geranyl diphosphate = terpinolene + diphosphate. The protein operates within secondary metabolite biosynthesis; terpenoid biosynthesis. In terms of biological role, monoterpene synthase (mono-TPS) involved in the biosynthesis of monoterpenes natural products, constituent of coffee beverage aroma. Catalyzes the conversion of (2E)-geranyl diphosphate (GPP) into limonene, beta-pinene, sabinene and beta-myrcene, and, as minor products, alpha-pinene and alpha-terpinolene. Can also, with a low efficiency, use farnesyl pyrophosphate (FPP) as substrate to produce beta-farnesene. Not able to use geranylgeranyl pyrophosphate (GGPP) as substrate. The polypeptide is Limonene synthase, chloroplastic (Coffea arabica (Arabian coffee)).